The following is a 930-amino-acid chain: Protein translocase subunit SecA (930 aa).

ATP is bound by residues Gln83, 101–105 (GEGKT), and Asp491.

Belongs to the SecA family. As to quaternary structure, monomer and homodimer. Part of the essential Sec protein translocation apparatus which comprises SecA, SecYEG and auxiliary proteins SecDF. Other proteins may also be involved.

It localises to the cell inner membrane. The protein localises to the cellular thylakoid membrane. It is found in the cytoplasm. It carries out the reaction ATP + H2O + cellular proteinSide 1 = ADP + phosphate + cellular proteinSide 2.. In terms of biological role, part of the Sec protein translocase complex. Interacts with the SecYEG preprotein conducting channel. Has a central role in coupling the hydrolysis of ATP to the transfer of proteins into and across the cell membrane, serving as an ATP-driven molecular motor driving the stepwise translocation of polypeptide chains across the membrane. Functionally, probably participates in protein translocation into and across both the cytoplasmic and thylakoid membranes in cyanobacterial cells. The chain is Protein translocase subunit SecA from Nostoc sp. (strain PCC 7120 / SAG 25.82 / UTEX 2576).